The sequence spans 120 residues: Dihydroneopterin aldolase (120 aa).

E20 and M114 together coordinate substrate.

This sequence belongs to the archaeal dihydroneopterin aldolase family. In terms of assembly, homotetramer.

It catalyses the reaction 7,8-dihydroneopterin = 6-hydroxymethyl-7,8-dihydropterin + glycolaldehyde. Its function is as follows. Catalyzes the conversion of 7,8-dihydroneopterin (H2Neo) to 6-hydroxymethyl-7,8-dihydropterin (6-HMD). The protein is Dihydroneopterin aldolase of Picrophilus torridus (strain ATCC 700027 / DSM 9790 / JCM 10055 / NBRC 100828 / KAW 2/3).